We begin with the raw amino-acid sequence, 345 residues long: Golgi-associated RAB2 interactor protein 1B (345 aa).

Disordered stretches follow at residues 222-241 (CSPS…SQPS) and 271-299 (SRSS…PCTR). The span at 275–285 (KKTENKKDSSG) shows a compositional bias: basic and acidic residues.

It belongs to the GARIN family.

The protein localises to the golgi apparatus. Functionally, RAB2B effector protein required for accurate acrosome formation and normal male fertility. In complex with RAB2A/RAB2B, seems to suppress excessive vesicle trafficking during acrosome formation. In Bos taurus (Bovine), this protein is Golgi-associated RAB2 interactor protein 1B (GARIN1B).